Reading from the N-terminus, the 83-residue chain is Small ribosomal subunit protein bS16 (83 aa).

This sequence belongs to the bacterial ribosomal protein bS16 family.

In Pseudomonas fluorescens (strain ATCC BAA-477 / NRRL B-23932 / Pf-5), this protein is Small ribosomal subunit protein bS16.